The chain runs to 642 residues: Threonine--tRNA ligase (642 aa).

Positions 1-63 (MNDITVTLPD…YNDARVVIVT (63 aa)) constitute a TGS domain. A catalytic region spans residues 242 to 533 (DHRKIGQELD…LIEHFNGKFP (292 aa)). The Zn(2+) site is built by Cys-334, His-385, and His-510.

This sequence belongs to the class-II aminoacyl-tRNA synthetase family. As to quaternary structure, homodimer. The cofactor is Zn(2+).

The protein localises to the cytoplasm. The catalysed reaction is tRNA(Thr) + L-threonine + ATP = L-threonyl-tRNA(Thr) + AMP + diphosphate + H(+). Catalyzes the attachment of threonine to tRNA(Thr) in a two-step reaction: L-threonine is first activated by ATP to form Thr-AMP and then transferred to the acceptor end of tRNA(Thr). This is Threonine--tRNA ligase from Haloquadratum walsbyi (strain DSM 16790 / HBSQ001).